We begin with the raw amino-acid sequence, 707 residues long: Polyribonucleotide nucleotidyltransferase (707 aa).

Residues Asp488 and Asp494 each coordinate Mg(2+). Residues 555–614 form the KH domain; the sequence is PRLYVMKINPEKIRDVIGKGGAVIRALTEETGTQINIEEDGTITIASNDSAKADEAKRRI. In terms of domain architecture, S1 motif spans 624–692; the sequence is GKVYEGAITK…EKGRVKLSMK (69 aa).

The protein belongs to the polyribonucleotide nucleotidyltransferase family. Mg(2+) serves as cofactor.

The protein localises to the cytoplasm. The enzyme catalyses RNA(n+1) + phosphate = RNA(n) + a ribonucleoside 5'-diphosphate. Involved in mRNA degradation. Catalyzes the phosphorolysis of single-stranded polyribonucleotides processively in the 3'- to 5'-direction. The sequence is that of Polyribonucleotide nucleotidyltransferase from Polaromonas sp. (strain JS666 / ATCC BAA-500).